The primary structure comprises 60 residues: LKCNKLVPLFYKTCPAGKNLCYKMFMVSNKTVPVKRGCIDVCPKNSLVLKYVCCNTDRCN.

4 cysteine pairs are disulfide-bonded: cysteine 3/cysteine 21, cysteine 14/cysteine 38, cysteine 42/cysteine 53, and cysteine 54/cysteine 59.

Belongs to the three-finger toxin family. Short-chain subfamily. Type IA cytotoxin sub-subfamily. In terms of assembly, monomer in solution; Homodimer and oligomer in the presence of negatively charged lipids forming a pore with a size ranging between 20 and 30 Angstroms. Expressed by the venom gland.

The protein resides in the secreted. The protein localises to the target cell membrane. Functionally, produces complete blockade of auricular contraction, which is irreversible at high concentrations. Induces apoptosis in leukemic cells. Possesses anti-arthritic and anti-inflammatory potential. In Naja kaouthia (Monocled cobra), this protein is Cytotoxin 1.